The primary structure comprises 309 residues: Nudix hydrolase 14, chloroplastic (309 aa).

The transit peptide at 1–60 (MAGFTLLPSRLLAFPSRALPRRLHHHHAKLILRCKMSSSSSSLTQSITLPSQPNEPVLVS) directs the protein to the chloroplast. Residues 139 to 292 (ARGPAVAVLI…KVLMSIGLYE (154 aa)) enclose the Nudix hydrolase domain. Residues 179–200 (MLDDDKGDFVGTAVREVEEEIG) carry the Nudix box motif. Positions 194 and 198 each coordinate Mg(2+).

It belongs to the Nudix hydrolase family. In terms of assembly, homodimer. Requires Mg(2+) as cofactor. Mn(2+) serves as cofactor. Expressed in roots, leaves, stems and inflorescences.

The protein resides in the plastid. The protein localises to the chloroplast. It catalyses the reaction ADP-sugar + H2O = AMP + alpha-D-aldose 1-phosphate.. Mediates the hydrolysis of some nucleoside diphosphate derivatives. Can use ADP-glucose, ADP-mannose and ADP-ribose as substrates. Regulates the intracellular ADP-glucose levels linked to starch biosynthesis. In Arabidopsis thaliana (Mouse-ear cress), this protein is Nudix hydrolase 14, chloroplastic (NUDT14).